Consider the following 498-residue polypeptide: Aldehyde dehydrogenase, mitochondrial (498 aa).

Residues 1–9 (MLRATLARL) constitute a mitochondrion transit peptide. Residue 242-247 (GSTAVG) participates in NAD(+) binding. The active-site Proton acceptor is glutamate 265. Cysteine 299 functions as the Nucleophile in the catalytic mechanism.

Belongs to the aldehyde dehydrogenase family.

The protein localises to the mitochondrion. It carries out the reaction an aldehyde + NAD(+) + H2O = a carboxylate + NADH + 2 H(+). It functions in the pathway alcohol metabolism; ethanol degradation; acetate from ethanol: step 2/2. Functionally, could have an RNA-binding activity in addition of its catalytic role. This chain is Aldehyde dehydrogenase, mitochondrial (ALDH2), found in Leishmania tarentolae (Sauroleishmania tarentolae).